A 113-amino-acid chain; its full sequence is Protein ORF3 (113 aa).

2 hydrophobic regions span residues Met-1–Cys-21 and Ala-32–Leu-52. The segment at Ala-27 to Leu-67 is interaction with host HPX. The tract at residues Val-47–Phe-71 is interaction with the capsid protein. Phosphoserine; by host is present on Ser-70. The tract at residues Phe-71–Arg-113 is homodimerization, and interaction with host AMBP/bikunin. The tract at residues Pro-89–Arg-113 is disordered. The interval Ser-94–Val-103 is interaction with host SRC, HCK, FYN, PIK3R3 and GRB2. The PTAP/PSAP motif signature appears at Pro-95–Pro-98.

Belongs to the hepevirus ORF3 protein family. Forms homooligomers. Interacts with host SRC, HCK, FYN, PIK3R3 and GRB2 (via SH3 domain); binding does not activate the kinases. Interacts with host AMBP/bikunin and AMBP/alpha-1-microglobulin peptides. Interacts with host HPX/hemopexin. Interacts (when phosphorylated) with capsid protein ORF2. Interacts with host TSG101; this interaction plays a role in viral release from the host cell. Interacts with host SIRPA; this interaction down-regulates the phosphorylation of host IRF3. Palmitoylated in the N-terminus.

Its subcellular location is the host endoplasmic reticulum membrane. The protein resides in the host cytoplasm. It is found in the host cytoskeleton. It localises to the virion. The protein localises to the host cell membrane. Its function is as follows. Small multifunctional phosphoprotein involved in virion morphogenesis, egress and counteracting host innate immunity. Plays critical roles in the final steps of viral release by interacting with host TSG101, a member of the vacuolar protein-sorting pathway and using other cellular host proteins involved in vesicle formation pathway. Also acts as a viroporin and forms ion conductive pores allowing viral particle release. Impairs the generation of type I interferon by down-regulating host TLR3 and TLR7 as well as their downstream signaling pathways. Down-regulates the phosphorylation of host IRF3 via the interaction with host SIRP-alpha, thereby inhibiting IFN-I expression. Interacts with host microtubules. This Bandicota bengalensis (lesser bandicoot rat) protein is Protein ORF3.